A 565-amino-acid polypeptide reads, in one-letter code: Receptor-like serine/threonine-protein kinase NCRK (565 aa).

The N-terminal stretch at 1–23 (MKMRVETALAILLVLISIQQCYG) is a signal peptide. At 24–103 (GVSNYTCTCF…SKKQYLSRKL (80 aa)) the chain is on the extracellular side. Asn-27, Asn-37, Asn-45, Asn-77, and Asn-85 each carry an N-linked (GlcNAc...) asparagine glycan. The chain crosses the membrane as a helical span at residues 104 to 124 (VIVILLFCGVLISLAFLASMI). Residues 125–565 (CYICRKDKFS…PVLLEPSAHI (441 aa)) are Cytoplasmic-facing. One can recognise a Protein kinase domain in the interval 210 to 495 (FSSNSVIGHG…REVVQILSTI (286 aa)). ATP contacts are provided by residues 216 to 224 (IGHGGSSCV) and Lys-238. Catalysis depends on Asp-339, which acts as the Proton acceptor. Residues Thr-378 and Thr-383 each carry the phosphothreonine modification. Tyr-391 is modified (phosphotyrosine).

This sequence belongs to the protein kinase superfamily. Ser/Thr protein kinase family. In terms of assembly, interacts with ARAC5. Post-translationally, phosphorylated. As to expression, mostly expressed in leaf primordia, root and shoot apical meristems, lateral root primordia, and stele of older roots and hypocotyls. In leaves and cotyledons, highest levels observed in trichomes, vasculatures, and hydathode endothem.

Its subcellular location is the cell membrane. The protein localises to the prevacuolar compartment membrane. It localises to the endosome. It catalyses the reaction L-seryl-[protein] + ATP = O-phospho-L-seryl-[protein] + ADP + H(+). The catalysed reaction is L-threonyl-[protein] + ATP = O-phospho-L-threonyl-[protein] + ADP + H(+). In Arabidopsis thaliana (Mouse-ear cress), this protein is Receptor-like serine/threonine-protein kinase NCRK (NCRK).